A 692-amino-acid polypeptide reads, in one-letter code: Glycine--tRNA ligase beta subunit (692 aa).

The protein belongs to the class-II aminoacyl-tRNA synthetase family. As to quaternary structure, tetramer of two alpha and two beta subunits.

It is found in the cytoplasm. The catalysed reaction is tRNA(Gly) + glycine + ATP = glycyl-tRNA(Gly) + AMP + diphosphate. In Pseudoalteromonas atlantica (strain T6c / ATCC BAA-1087), this protein is Glycine--tRNA ligase beta subunit.